The chain runs to 2643 residues: BAH and coiled-coil domain-containing protein 1 (2643 aa).

Disordered regions lie at residues 23–45 and 84–106; these read SAAA…HFQP and SAAS…RGSH. Residue K220 is modified to N6-acetyllysine. Composition is skewed to basic and acidic residues over residues 224–249 and 683–702; these read KEKV…DRQK and ERPD…DGEV. Disordered regions lie at residues 224–273, 674–704, 721–758, 985–1023, and 1038–1299; these read KEKV…SCEG, PATK…EVRQ, GRPD…LESE, RKPE…PSSA, and TLKT…KALP. The segment covering 985-1003 has biased composition (basic and acidic residues); the sequence is RKPEDRHMELEEAAQEKTP. Residues 1133-1149 show a composition bias toward pro residues; it reads RPEPPRTFLPGEPPPCS. The segment covering 1210–1224 has biased composition (polar residues); it reads ATGQTNSTQGGMQNE. Acidic residues predominate over residues 1269–1284; the sequence is QEEETQLEESGGDSEV. Coiled-coil stretches lie at residues 1346-1373 and 1437-1486; these read ALLS…DVLA and LKAA…SSRS. Residues 1466 to 1484 show a composition bias toward basic and acidic residues; it reads QRELARLQRRHDHEREESS. 8 disordered regions span residues 1466 to 1520, 1537 to 1559, 1604 to 1641, 1746 to 1781, 1875 to 1896, 2055 to 2124, 2322 to 2341, and 2349 to 2386; these read QREL…DSKK, GDEP…QSVS, KEAA…GREM, RAPG…SRDT, FDED…GVQL, SSCR…HFLG, CPSS…TGVP, and SMSS…SDDE. The segment covering 1487 to 1501 has biased composition (basic residues); sequence PARRGPGRPRKRKHS. Basic and acidic residues predominate over residues 1631–1641; that stretch reads PHPDGDSGREM. Positions 1757–1767 are enriched in basic residues; the sequence is GKKKAKGKVKT. The span at 1875 to 1892 shows a compositional bias: acidic residues; sequence FDEDDTSFSDEEEEEEEA. A compositionally biased stretch (low complexity) spans 2349 to 2374; the sequence is SMSSSSSGSSTSSSSGSVSTSSLCSS. Positions 2375 to 2386 are enriched in acidic residues; sequence DNEDSSYSSDDE. Positions 2517-2637 constitute a BAH domain; the sequence is ETLRIGDCAV…PTTGRLVTAD (121 aa).

This is BAH and coiled-coil domain-containing protein 1 (Bahcc1) from Mus musculus (Mouse).